Reading from the N-terminus, the 1397-residue chain is Protein RhsC (1397 aa).

28 consecutive repeat copies span residues 330 to 352, 353 to 374, 375 to 417, 418 to 438, 439 to 460, 461 to 481, 482 to 502, 503 to 525, 526 to 546, 547 to 567, 568 to 588, 589 to 609, 610 to 629, 630 to 650, 651 to 671, 672 to 691, 692 to 711, 712 to 734, 735 to 758, 808 to 828, 829 to 850, 851 to 871, 872 to 894, 895 to 930, 931 to 959, 960 to 984, 985 to 1019, and 1162 to 1186. The segment at 330-1186 is 28 X approximate tandem repeats; it reads NTQVRSFTYD…LNEENPHQLQ (857 aa). Residues 1292 to 1312 form a disordered region; sequence GGQDQRGESKGDGLWGPGKAS.

Belongs to the RHS family.

Its function is as follows. Rhs elements have a nonessential function. They may play an important role in the natural ecology of the cell. The sequence is that of Protein RhsC (rhsC) from Escherichia coli (strain K12).